The chain runs to 267 residues: MKKILLTVSLGLALSACATQGTADKDAQITQDWSVEKLYAEAQDELNSSNYTRAVKLYEILESRFPTSRHARQSQLDTAYAYYKDDEKDKALAAIERFRRLHPQHPNMDYALYLRGLVLFNEDQSFLNKLASQDWSDRDPKANREAYQAFAELVQRFPNSKYAADATARMVKLVDALGGNEMSVARYYMKRGAYIAAANRAKKIIGSYQNTRYVEESLAILELAYKKLDKPQLAADTRRVLETNFPKSPFLTHAWQPDDMPWWRYWH.

The N-terminal stretch at 1 to 16 (MKKILLTVSLGLALSA) is a signal peptide. Cys17 carries N-palmitoyl cysteine lipidation. The S-diacylglycerol cysteine moiety is linked to residue Cys17.

The protein belongs to the BamD family. As to quaternary structure, part of the Bam complex.

It is found in the cell outer membrane. Part of the outer membrane protein assembly complex, which is involved in assembly and insertion of beta-barrel proteins into the outer membrane. Required for efficient transformation of Neisseria gonorrhoeae by species-related DNA. This chain is Outer membrane protein assembly factor BamD, found in Neisseria gonorrhoeae.